We begin with the raw amino-acid sequence, 206 residues long: Ras-related protein Rab-18 (206 aa).

Met-1 carries the post-translational modification N-acetylmethionine. Positions 17, 20, 21, 22, 23, 34, 35, 40, 66, 123, and 125 each coordinate GTP. Ser-22 is a binding site for Mg(2+). 2 short sequence motifs (switch) span residues 31-45 and 63-80; these read DTFD…GVDF and DTAG…YYRG. Thr-40 is a Mg(2+) binding site. Position 144 is a phosphoserine (Ser-144). A GTP-binding site is contributed by Ala-152. The S-palmitoyl cysteine moiety is linked to residue Cys-199. Cys-203 is modified (cysteine methyl ester). A lipid anchor (S-geranylgeranyl cysteine) is attached at Cys-203. A propeptide spans 204–206 (removed in mature form); the sequence is SVL.

Belongs to the small GTPase superfamily. Rab family. In terms of assembly, interacts (in GTP-bound form) with ZFYVE1. Interacts with ZW10 and this interaction is enhanced in the presence of ZFYVE1. Interacts with BSCL2. As to quaternary structure, (Microbial infection) Interacts with Hepatitis C virus (HCV) non-structural protein 5A; this interaction may promote the association of NS5A and other viral replicase components with lipid droplets. Mg(2+) is required as a cofactor. As to expression, ubiquitous.

Its subcellular location is the endoplasmic reticulum membrane. It is found in the golgi apparatus. It localises to the cis-Golgi network membrane. The protein resides in the lipid droplet. The protein localises to the apical cell membrane. The enzyme catalyses GTP + H2O = GDP + phosphate + H(+). Regulated by guanine nucleotide exchange factor (GEF) RAB3GAP1-RAB3GAP2 complex at the cis-Golgi membrane which promotes the exchange of bound GDP for free GTP. Regulated by GTPase activating protein (GAP) TBC1D20 at the ER membrane which increases the GTP hydrolysis activity. Inhibited by GDP dissociation inhibitors (GDIs) which prevent Rab-GDP dissociation. Its function is as follows. The small GTPases Rab are key regulators of intracellular membrane trafficking, from the formation of transport vesicles to their fusion with membranes. Rabs cycle between an inactive GDP-bound form and an active GTP-bound form that is able to recruit to membranes different sets of downstream effectors directly responsible for vesicle formation, movement, tethering and fusion. RAB18 is required for the localization of ZFYVE1 to lipid droplets and for its function in mediating the formation of endoplasmic reticulum-lipid droplets (ER-LD) contacts. Also required for maintaining endoplasmic reticulum structure. Plays a role in apical endocytosis/recycling. Plays a key role in eye and brain development and neurodegeneration. This is Ras-related protein Rab-18 from Homo sapiens (Human).